A 570-amino-acid polypeptide reads, in one-letter code: Grayanic acid biosynthesis cluster cytochrome P450 monooxygenase (570 aa).

Residues 9–29 form a helical membrane-spanning segment; sequence ILTIFWLPIAAAXLYGAGLAI. Asparagine 191 is a glycosylation site (N-linked (GlcNAc...) asparagine). Residue cysteine 510 participates in heme binding.

It belongs to the cytochrome P450 family. The cofactor is heme.

It is found in the membrane. It participates in secondary metabolite biosynthesis. Its function is as follows. Non-reducing polyketide synthase; part of the gene cluster that mediates the biosynthesis of orcinol depsidone grayanic acid (GRA), the only major secondary metabolite known in C.grayi. The first step consists in the ring and depside synthesis by PKS16 leading to 4-O-demethylsphaerophorin, involving different orcinol-like rings, one with acetyl CoA and the other with octanoyl CoA as the starter. Further depsidone formation by the GRA cluster-specific cytochrome P450 leads to 4-O-demethylgrayanic acid. Finally, the cluster specific O-methyltransferase probably converts the 4-O-demethylgrayanic acid into grayanic acid. This is Grayanic acid biosynthesis cluster cytochrome P450 monooxygenase from Cladonia grayi (Gray's cup lichen).